A 246-amino-acid polypeptide reads, in one-letter code: Protein PHLOEM PROTEIN 2-LIKE A1 (246 aa).

As to expression, vascular tissues, specifically in phloem companion cell-sieve element complexes.

This chain is Protein PHLOEM PROTEIN 2-LIKE A1 (PP2A1), found in Arabidopsis thaliana (Mouse-ear cress).